A 70-amino-acid polypeptide reads, in one-letter code: Dermaseptin-H3 (70 aa).

Residues M1–C22 form the signal peptide. A propeptide spanning residues E23–M43 is cleaved from the precursor. The tract at residues E25–K44 is disordered. Acidic residues predominate over residues E30–Q40. Residue L70 is modified to Leucine amide.

Expressed by the skin glands.

It localises to the secreted. In terms of biological role, has antibacterial activity against the Gram-negative bacteria E.coli and P.aeruginosa, and the Gram-positive bacteria S.aureus and M.luteus. Has antiprotozoal activity against L.amazonensis. No hemolytic activity. The chain is Dermaseptin-H3 from Pithecopus hypochondrialis (Orange-legged leaf frog).